The primary structure comprises 1375 residues: Capping protein, Arp2/3 and myosin-I linker protein 3 (1375 aa).

A disordered region spans residues 124–151 (IRRGNADTPEGPRDTSPNSETSTSTTHS). A compositionally biased stretch (low complexity) spans 138 to 151 (TSPNSETSTSTTHS). LRR repeat units lie at residues 244 to 264 (SLEE…QKLA), 274 to 295 (VLHA…SLSQ), 303 to 323 (GLTK…QALG), 335 to 357 (SLRY…NALY), 365 to 386 (ALVH…GALL), 392 to 413 (HLTY…EAPP), 424 to 444 (TLSH…RALL), 455 to 475 (DLHL…ALQE), 482 to 501 (CIGS…LTLV), and 509 to 530 (SLKH…EEIL). Disordered regions lie at residues 864 to 901 (RTLS…GTNI) and 969 to 1375 (KLRH…PGTD). Positions 981-997 (PRTTPPGPGRPSVPVPG) are enriched in pro residues. The span at 1007–1022 (RLDEGLEDFFSRRVMD) shows a compositional bias: basic and acidic residues. Positions 1047 to 1062 (QKKRRRGLFHFRRPRS) are enriched in basic residues. Pro residues predominate over residues 1078–1097 (LPPPPPPPPTQESPPSPDPP). The span at 1098 to 1108 (SLGNNSSPCWS) shows a compositional bias: low complexity. The segment covering 1219-1229 (RRAEATWHIAE) has biased composition (basic and acidic residues). Residues 1233 to 1244 (ANHSCQSPSPAS) are compositionally biased toward polar residues. The segment covering 1272–1281 (PIGPRPPKPV) has biased composition (pro residues). Positions 1348–1360 (QSCDKLEPDRRQP) are enriched in basic and acidic residues.

The protein belongs to the CARMIL family.

The protein resides in the cytoplasm. It is found in the cell membrane. The protein is Capping protein, Arp2/3 and myosin-I linker protein 3 (Carmil3) of Mus musculus (Mouse).